A 188-amino-acid chain; its full sequence is GMP synthase [glutamine-hydrolyzing] subunit A (188 aa).

The 188-residue stretch at 1–188 folds into the Glutamine amidotransferase type-1 domain; that stretch reads MIIIMDNGGQ…RNFAKICGEL (188 aa). C78 (nucleophile) is an active-site residue. Catalysis depends on residues H165 and E167.

Heterodimer composed of a glutamine amidotransferase subunit (A) and a GMP-binding subunit (B).

The enzyme catalyses XMP + L-glutamine + ATP + H2O = GMP + L-glutamate + AMP + diphosphate + 2 H(+). The protein operates within purine metabolism; GMP biosynthesis; GMP from XMP (L-Gln route): step 1/1. Functionally, catalyzes the synthesis of GMP from XMP. In Pyrococcus furiosus (strain ATCC 43587 / DSM 3638 / JCM 8422 / Vc1), this protein is GMP synthase [glutamine-hydrolyzing] subunit A.